Here is a 380-residue protein sequence, read N- to C-terminus: Histidinol-phosphate aminotransferase (380 aa).

The residue at position 232 (Lys232) is an N6-(pyridoxal phosphate)lysine.

The protein belongs to the class-II pyridoxal-phosphate-dependent aminotransferase family. Histidinol-phosphate aminotransferase subfamily. As to quaternary structure, homodimer. Requires pyridoxal 5'-phosphate as cofactor.

It carries out the reaction L-histidinol phosphate + 2-oxoglutarate = 3-(imidazol-4-yl)-2-oxopropyl phosphate + L-glutamate. Its pathway is amino-acid biosynthesis; L-histidine biosynthesis; L-histidine from 5-phospho-alpha-D-ribose 1-diphosphate: step 7/9. The protein is Histidinol-phosphate aminotransferase of Mycobacterium bovis (strain BCG / Pasteur 1173P2).